Consider the following 461-residue polypeptide: 26S proteasome regulatory subunit 8 (461 aa).

Residue 185-192 participates in ATP binding; sequence GPPGTGKT.

This sequence belongs to the AAA ATPase family.

The protein resides in the cytoplasm. It localises to the nucleus. The 26S proteasome is involved in the ATP-dependent degradation of ubiquitinated proteins. The regulatory (or ATPase) complex confers ATP dependency and substrate specificity to the 26S complex. In Xenopus laevis (African clawed frog), this protein is 26S proteasome regulatory subunit 8 (psmc5).